The chain runs to 37 residues: Large ribosomal subunit protein bL36 (37 aa).

Belongs to the bacterial ribosomal protein bL36 family.

The polypeptide is Large ribosomal subunit protein bL36 (Streptomyces avermitilis (strain ATCC 31267 / DSM 46492 / JCM 5070 / NBRC 14893 / NCIMB 12804 / NRRL 8165 / MA-4680)).